A 139-amino-acid polypeptide reads, in one-letter code: MFDMGFLELMLIGVVALLVLGPERLPTAARTVGLWVGKIKRTVSGMQREISAQLEAEELRQKLNEQQRKLDAGLGKVRDEVERHGDAPSSRGGQPPPSRTTPTAARSADDTDETPPSTAASRETPEPPAAPSAKDSNAP.

The chain crosses the membrane as a helical span at residues 1 to 21 (MFDMGFLELMLIGVVALLVLG). Over residues 66–86 (QQRKLDAGLGKVRDEVERHGD) the composition is skewed to basic and acidic residues. The disordered stretch occupies residues 66 to 139 (QQRKLDAGLG…APSAKDSNAP (74 aa)).

It belongs to the TatB family. The Tat system comprises two distinct complexes: a TatABC complex, containing multiple copies of TatA, TatB and TatC subunits, and a separate TatA complex, containing only TatA subunits. Substrates initially bind to the TatABC complex, which probably triggers association of the separate TatA complex to form the active translocon.

The protein resides in the cell inner membrane. Its function is as follows. Part of the twin-arginine translocation (Tat) system that transports large folded proteins containing a characteristic twin-arginine motif in their signal peptide across membranes. Together with TatC, TatB is part of a receptor directly interacting with Tat signal peptides. TatB may form an oligomeric binding site that transiently accommodates folded Tat precursor proteins before their translocation. The chain is Sec-independent protein translocase protein TatB from Chromohalobacter salexigens (strain ATCC BAA-138 / DSM 3043 / CIP 106854 / NCIMB 13768 / 1H11).